Reading from the N-terminus, the 860-residue chain is Protein argonaute-2 (860 aa).

Y2 is modified (3'-nitrotyrosine). A PAZ domain is found at 230–349; the sequence is PVIEFVCEVL…LPLEVCNIVA (120 aa). The interval 312 to 317 is interaction with guide RNA; it reads YFKDRH. The residue at position 388 (S388) is a Phosphoserine. One can recognise a Piwi domain in the interval 518–819; it reads LVVVILPGKT…VAFRARYHLV (302 aa). An interaction with guide RNA region spans residues 525-567; the sequence is GKTPVYAEVKRVGDTVLGMATQCVQMKNVQRTTPQTLSNLCLK. An interaction with GW182 family members region spans residues 588–591; sequence FQQP. D598 contributes to the a divalent metal cation binding site. The tract at residues 651–661 is interaction with GW182 family members; sequence LIQFYKSTRFK. D670 is an a divalent metal cation binding site. P701 is subject to 4-hydroxyproline. 3 interaction with guide RNA regions span residues 710–711, 754–762, and 791–813; these read KR, HAGIQGTSR, and YVRC…VAFR. Position 808 (H808) interacts with a divalent metal cation. 4 positions are modified to phosphoserine: S825, S829, S832, and S835.

Belongs to the argonaute family. Ago subfamily. In terms of assembly, interacts with DICER1 through its Piwi domain and with TARBP2 during assembly of the RNA-induced silencing complex (RISC). Together, DICER1, AGO2 and TARBP2 constitute the trimeric RISC loading complex (RLC), or micro-RNA (miRNA) loading complex (miRLC). Within the RLC/miRLC, DICER1 and TARBP2 are required to process precursor miRNAs (pre-miRNAs) to mature miRNAs and then load them onto AGO2. AGO2 bound to the mature miRNA constitutes the minimal RISC and may subsequently dissociate from DICER1 and TARBP2. Note however that the term RISC has also been used to describe the trimeric RLC/miRLC. The formation of RISC complexes containing siRNAs rather than miRNAs appears to occur independently of DICER1. Interacts with AGO1. Also interacts with DDB1, DDX5, DDX6, DDX20, DHX30, DHX36, DDX47, DHX9, ELAVL, FXR1, GEMIN4, HNRNPF, IGF2BP1, ILF3, IMP8, MATR3, PABPC1, PRMT5, P4HA1, P4HB, RBM4, SART3, TNRC6A, TNRC6B, UPF1 and YBX1. Interacts with the P-body components DCP1A and XRN1. Associates with polysomes and messenger ribonucleoproteins (mNRPs). Interacts with RBM4; the interaction is modulated under stress-induced conditions, occurs under both cell proliferation and differentiation conditions and in an RNA- and phosphorylation-independent manner. Interacts with LIMD1, WTIP and AJUBA. Interacts with TRIM71; the interaction increases in presence of RNA. Interacts with APOBEC3G in an RNA-dependent manner. Interacts with APOBEC3A, APOBEC3C, APOBEC3F and APOBEC3H. Interacts with DICER1, TARBP2, EIF6, MOV10 and RPL7A (60S ribosome subunit); they form a large RNA-induced silencing complex (RISC). Interacts with FMR1. Interacts with ZFP36. Interacts with RC3H1; the interaction is RNA independent. Found in a complex, composed of AGO2, CHD7 and ARB2A. Interacts with SND1 and SYT11. Interacts with CLNK. Interacts with GARRE1. Interacts with GRB2; this interaction is important for the formation of a ternary complex containing GRB2, AGO2 and DICER1. Requires Mg(2+) as cofactor. The cofactor is Mn(2+). Hydroxylated. 4-hydroxylation appears to enhance protein stability but is not required for miRNA-binding or endonuclease activity. In terms of processing, ubiquitinated on surface-exposed lysines by a SCF-like E3 ubiquitin-protein ligase complex containing ZSWIM8 during target-directed microRNA degradation (TDMD), a process that mediates degradation of microRNAs (miRNAs). Ubiquitination by the SCF-like E3 ubiquitin-protein ligase complex containing ZSWIM8 leads to its subsequent degradation, thereby exposing miRNAs for degradation. ZSWIM8 recognizes and binds AGO2 when it is engaged with a TDMD target. Post-translationally, phosphorylation at Ser-388 by AKT3; leads to up-regulate translational repression of microRNA target and down-regulate endonucleolytic cleavage. A phosphorylation cycle of C-terminal serine cluster (Ser-825-Ser-835) regulates the release of target mRNAs. Target-binding leads to phosphorylation of these residues by CSNK1A1, which reduces the affinity of AGO2 for mRNA and enables target release. The ANKRD52-PPP6C phosphatase complex dephosphorylates the residues, which primes AGO2 for binding a new target.

It localises to the cytoplasm. It is found in the P-body. Its subcellular location is the nucleus. The enzyme catalyses Endonucleolytic cleavage to 5'-phosphomonoester.. Required for RNA-mediated gene silencing (RNAi) by the RNA-induced silencing complex (RISC). The 'minimal RISC' appears to include AGO2 bound to a short guide RNA such as a microRNA (miRNA) or short interfering RNA (siRNA). These guide RNAs direct RISC to complementary mRNAs that are targets for RISC-mediated gene silencing. The precise mechanism of gene silencing depends on the degree of complementarity between the miRNA or siRNA and its target. Binding of RISC to a perfectly complementary mRNA generally results in silencing due to endonucleolytic cleavage of the mRNA specifically by AGO2. Binding of RISC to a partially complementary mRNA results in silencing through inhibition of translation, and this is independent of endonuclease activity. May inhibit translation initiation by binding to the 7-methylguanosine cap, thereby preventing the recruitment of the translation initiation factor eIF4-E. May also inhibit translation initiation via interaction with EIF6, which itself binds to the 60S ribosomal subunit and prevents its association with the 40S ribosomal subunit. The inhibition of translational initiation leads to the accumulation of the affected mRNA in cytoplasmic processing bodies (P-bodies), where mRNA degradation may subsequently occur. In some cases RISC-mediated translational repression is also observed for miRNAs that perfectly match the 3' untranslated region (3'-UTR). Can also up-regulate the translation of specific mRNAs under certain growth conditions. Binds to the AU element of the 3'-UTR of the TNF (TNF-alpha) mRNA and up-regulates translation under conditions of serum starvation. Also required for transcriptional gene silencing (TGS), in which short RNAs known as antigene RNAs or agRNAs direct the transcriptional repression of complementary promoter regions. This chain is Protein argonaute-2 (Ago2), found in Rattus norvegicus (Rat).